The primary structure comprises 715 residues: Transcription activator of gluconeogenesis MGYG_02011 (715 aa).

Residues 1 to 14 (MSPHQTTGQESDNM) are compositionally biased toward polar residues. Positions 1–28 (MSPHQTTGQESDNMAVNGENAPASSQYI) are disordered. The zn(2)-C6 fungal-type DNA-binding region spans 66–94 (CYACQRGHLTCGDERPCQRCIKRGFQDAC). Polar residues-rich tracts occupy residues 129–166 (QNNV…PQNK), 179–191 (YASQ…TYQI), 203–223 (SLPQ…GQFN), and 362–385 (MMTT…RPNA). 4 disordered regions span residues 129–223 (QNNV…GQFN), 354–414 (SPAS…RRRH), 534–569 (NHNV…NSST), and 628–663 (GSNG…NGRG). Positions 386 to 400 (SVSQQRQQPVVSTPQ) are enriched in low complexity. Composition is skewed to polar residues over residues 535-554 (HNVN…SRGS) and 639-649 (GEASSSEANEL). Over residues 650–662 (NGSNANGATTNGR) the composition is skewed to low complexity.

This sequence belongs to the ERT1/acuK family.

It is found in the nucleus. Transcription factor which regulates nonfermentable carbon utilization. Activator of gluconeogenetic genes. The polypeptide is Transcription activator of gluconeogenesis MGYG_02011 (Arthroderma gypseum (strain ATCC MYA-4604 / CBS 118893) (Microsporum gypseum)).